A 289-amino-acid polypeptide reads, in one-letter code: MSPLANHSFVKMNGIGNEIVVLDLRDVKHVVTPDEARAVASRVPYDQMMVLQRPRFDGTEAFIRIYNNDGSESGACGNGMRCVVSQVFGKTGQTSATFETRAGLLNCWQGPAPDLYTVDMGVPRFGWQDIPLAEEFRDTRYIELQIGPIDAPILHSPSVVSMGNPHAVFWVDNDVNSYDLERFGPLLENHPIFPERANITLAQIVDRDHITMRTWERGAGLTRACGSAACATAVAAARLKRANRLVHMTLPGGELTIEWRERDDHVLMTGTATFEFEGRFEPALFASVA.

Substrate is bound by residues Asn17, Gln47, and Asn67. The active-site Proton donor is the Cys76. Substrate contacts are provided by residues 77-78 (GN), Asn164, Asn198, and 216-217 (ER). The active-site Proton acceptor is the Cys225. 226–227 (GS) serves as a coordination point for substrate.

Belongs to the diaminopimelate epimerase family. In terms of assembly, homodimer.

Its subcellular location is the cytoplasm. The enzyme catalyses (2S,6S)-2,6-diaminopimelate = meso-2,6-diaminopimelate. It functions in the pathway amino-acid biosynthesis; L-lysine biosynthesis via DAP pathway; DL-2,6-diaminopimelate from LL-2,6-diaminopimelate: step 1/1. Its function is as follows. Catalyzes the stereoinversion of LL-2,6-diaminopimelate (L,L-DAP) to meso-diaminopimelate (meso-DAP), a precursor of L-lysine and an essential component of the bacterial peptidoglycan. This chain is Diaminopimelate epimerase, found in Bradyrhizobium sp. (strain ORS 278).